The chain runs to 487 residues: Aspyridones efflux protein apdF (487 aa).

Residues 1–21 are compositionally biased toward basic and acidic residues; sequence MSSVRESSKDESIVHPPKAPE. The interval 1-25 is disordered; it reads MSSVRESSKDESIVHPPKAPESEPF. A helical transmembrane segment spans residues 35-55; the sequence is VALGAGGVLFCTFGYVNAFGV. Residue Asn67 is glycosylated (N-linked (GlcNAc...) asparagine). The next 8 helical transmembrane spans lie at 75–95, 99–119, 126–146, 159–179, 191–211, 234–254, 262–282, and 293–313; these read WIGS…GPLF, GAKV…MTSL, FFLA…APAL, AAMG…PIAL, WAVR…VLGI, VATL…FFYL, GMST…SFFG, and IGPY…TFCW. Asn319 carries an N-linked (GlcNAc...) asparagine glycan. Helical transmembrane passes span 322–342, 354–374, and 385–405; these read IIVF…ITPA, IGTY…IGPP, and GFLQ…VLAF.

Belongs to the major facilitator superfamily. Monocarboxylate porter (TC 2.A.1.13) family.

It is found in the cell membrane. In terms of biological role, efflux pump that may be involved in the secretion of aspyridones. This is Aspyridones efflux protein apdF from Emericella nidulans (strain FGSC A4 / ATCC 38163 / CBS 112.46 / NRRL 194 / M139) (Aspergillus nidulans).